The following is a 257-amino-acid chain: MRPCRSLRTAALAVVLTVLLHPVALGRATPGESEQNYLWQRRYECYASNGTQRLLDRCAYNREEFVRFDSDIGEFRAVSELGRQVAESWNLEYLQQARAEVDRVCRHNYELFQGLPVLLQTQPRVSVSPSKKGPLQHHSLLVCHVTDFYPGHVQVRWFLNGREETAGVVSTHPIHNGDWTFQILVMLEMTPHQGDVYTCHVEHPSLDSPITVEWKAQSDSARSKMLAGVGGLVLGLVSLAVGVFMHRRSKKAQQGCR.

Residues 1 to 29 form the signal peptide; sequence MRPCRSLRTAALAVVLTVLLHPVALGRAT. Positions 30 to 120 are beta-1; that stretch reads PGESEQNYLW…LFQGLPVLLQ (91 aa). The Extracellular portion of the chain corresponds to 30-224; sequence PGESEQNYLW…KAQSDSARSK (195 aa). Intrachain disulfides connect cysteine 45/cysteine 105 and cysteine 143/cysteine 199. A glycan (N-linked (GlcNAc...) asparagine) is linked at asparagine 49. The tract at residues 121 to 214 is beta-2; the sequence is TQPRVSVSPS…SLDSPITVEW (94 aa). The Ig-like C1-type domain maps to 123–211; sequence PRVSVSPSKK…EHPSLDSPIT (89 aa). Positions 215-224 are connecting peptide; sequence KAQSDSARSK. A helical transmembrane segment spans residues 225–245; it reads MLAGVGGLVLGLVSLAVGVFM. Residues 246–257 lie on the Cytoplasmic side of the membrane; the sequence is HRRSKKAQQGCR.

This sequence belongs to the MHC class II family.

The protein localises to the membrane. The protein is RLA class II histocompatibility antigen, DP beta chain of Oryctolagus cuniculus (Rabbit).